Here is a 402-residue protein sequence, read N- to C-terminus: MTMMSDLSQDLLEEILSRVPRTSLGAVRSTCKRWNTLFKDRILCKAEETRDQFRFIMKKYKLCSMRFDLNGTLNEDGGTEFVDPSIKELGHFFNQVKISKVFQCDGLLLCVTKEDNIRLVVWNPYLGQIRWIESGNTNYRLFDRYAIGYDNNRKHKILRFLEYYNFNMKHRFLEYEIYDFSSNSWRVLDIAPRWEIESYQRGASLKGNTYFIAKEKIEYEEDGEFPEPADNLLCFDFTTESFGQFLPLPFQHYLYDVGALSSLGDEKLAALFQCGDTDLSEVEIWVTTLTETNTVSWNPFLKVDMEPHYGRSFMFDYYGGSFFIDEEKKLAVVFQFDESGMTRYEDATYIIGENGYVKKVRLGEAPANQGGYCFPSVCFSSYVPSLVQINQIVGFKKEREEE.

The region spanning 1-56 is the F-box domain; it reads MTMMSDLSQDLLEEILSRVPRTSLGAVRSTCKRWNTLFKDRILCKAEETRDQFRFI.

This chain is Putative F-box protein At3g20030, found in Arabidopsis thaliana (Mouse-ear cress).